Reading from the N-terminus, the 193-residue chain is MFKNTFQSGFLSILYSIGSKPLQIWDKKVRNGHIKRITDNDIQSLVLEVEGTNVSTTYITCPADPKKTLGIKLPFLVMIIKNLKKYFTFEVQVLDDKNVRRRFRASNYQSTTRVKPFICTMPMRLDDGWNQIQFNLSDFTRRAYGTNYIETLRVQIHANCRIRRVYFSDRLYSEDELPAEFKLYLPVQNKAKQ.

This sequence belongs to the CFAP20 family.

It is found in the nucleus. The protein resides in the cytoplasm. Its subcellular location is the cytoskeleton. It localises to the microtubule organizing center. The protein localises to the centrosome. It is found in the centriole. The protein resides in the cilium basal body. Its subcellular location is the cilium axoneme. In terms of biological role, cilium- and flagellum-specific protein that plays a role in axonemal structure organization and motility. Microtubule inner protein (MIP) part of the dynein-decorated doublet microtubules (DMTs) in cilia axoneme, which is required for motile cilia beating. Involved in the regulation of the size and morphology of cilia. Required for axonemal microtubules polyglutamylation. This chain is Cilia- and flagella-associated protein 20 (cfap20), found in Xenopus laevis (African clawed frog).